The sequence spans 3206 residues: Highly reducing polyketide synthase ltbA (3206 aa).

Residues 5-434 (PAPIAIIGVG…GTNCHVILEA (430 aa)) form the Ketosynthase family 3 (KS3) domain. Catalysis depends on for beta-ketoacyl synthase activity residues C179, H314, and H354. Residues 441-463 (PTGTNGIKTNGTRINGIKTNGAD) show a composition bias toward polar residues. A disordered region spans residues 441-472 (PTGTNGIKTNGTRINGIKTNGADTNERESMKN). The tract at residues 575 to 890 (VFSGQGAQWH…EYLSALQRNT (316 aa)) is malonyl-CoA:ACP transacylase (MAT) domain. Residues 958-1098 (HDLLGLFDPA…GEITVEYETD (141 aa)) are N-terminal hotdog fold. A dehydratase (DH) domain region spans residues 958-1278 (HDLLGLFDPA…LLVNLRAIGE (321 aa)). Residues 958-1284 (HDLLGLFDPA…AIGETREDED (327 aa)) enclose the PKS/mFAS DH domain. The active-site Proton acceptor; for dehydratase activity is the H990. Residues 1128–1284 (DTDMTKSEFY…AIGETREDED (157 aa)) are C-terminal hotdog fold. D1193 functions as the Proton donor; for dehydratase activity in the catalytic mechanism. Positions 1450-1640 (ESGILVGPYE…LARNGFGGIH (191 aa)) are methyltransferase (CMet) domain. Positions 1871 to 2185 (LLSSLRFVDD…RKHTGKVVLQ (315 aa)) are enoyl reductase (ER) domain. The tract at residues 2208 to 2395 (GTYVAAGGLG…SVDAHGALKE (188 aa)) is ketoreductase (KR) domain. Residues 2499 to 2577 (EEAEQLIRDA…ALAATVASRS (79 aa)) form the Carrier domain. S2537 is modified (O-(pantetheine 4'-phosphoryl)serine). The disordered stretch occupies residues 2584 to 2611 (IRHSSRLQEATTQAENKDAPKNEKEGPS). Positions 2598-2610 (ENKDAPKNEKEGP) are enriched in basic and acidic residues. Residues 2994–3206 (HLIPSFGKAV…IKTIIQAGQE (213 aa)) are carnitine O-acyltransferase (cAT) domain.

Pantetheine 4'-phosphate is required as a cofactor.

It participates in secondary metabolite biosynthesis. Functionally, highly reducing polyketide synthase; part of the gene cluster that mediates the biosynthesis of luteodienoside A, a glycosylated polyketide consisting of an unusual 1-O-beta-D-glucopyranosyl-myo-inositol (glucinol) ester of 3-hydroxy-2,2,4-trimethylocta-4,6-dienoic acid. LtbA produces the trimethylated polyketide chain from acetyl-CoA, malonyl-CoA and S-adenosylmethionine (SAM). The ltbA carnitine O-acyltransferase (cAT) domain then uses glucinol produced by the glycosyltransferase ltbB as an offloading substrate to release luteodienoside A. Furthermore, the PKS C-methyltransferase (CMeT) domain is capable of catalysing gem-dimethylation of the 3-hydroxy-2,2,4-trimethylocta-4,6-dienoic acid intermediate, without requiring reversible product release and recapture by the cAT domain. Since ltbA and ltbB are sufficient for the biosynthesis of luteodienoside A, the functions of the methyltransferase ltbC and the FAD-binding monooxygenase ltbD within the pathway remain obscur. The protein is Highly reducing polyketide synthase ltbA of Aspergillus luteorubrus.